The sequence spans 148 residues: UPF0178 protein CA_C2825 (148 aa).

Belongs to the UPF0178 family.

The chain is UPF0178 protein CA_C2825 from Clostridium acetobutylicum (strain ATCC 824 / DSM 792 / JCM 1419 / IAM 19013 / LMG 5710 / NBRC 13948 / NRRL B-527 / VKM B-1787 / 2291 / W).